A 265-amino-acid polypeptide reads, in one-letter code: Translation initiation factor 2 subunit alpha (265 aa).

Residues 12–83 (GELIIGTVYK…KKGHVDASLK (72 aa)) enclose the S1 motif domain.

The protein belongs to the eIF-2-alpha family. Heterotrimer composed of an alpha, a beta and a gamma chain.

In terms of biological role, eIF-2 functions in the early steps of protein synthesis by forming a ternary complex with GTP and initiator tRNA. This is Translation initiation factor 2 subunit alpha from Methanobrevibacter smithii (strain ATCC 35061 / DSM 861 / OCM 144 / PS).